The primary structure comprises 878 residues: Serine/threonine-protein kinase D2 (878 aa).

The span at 1–12 (MATAPSYPAGLP) shows a compositional bias: low complexity. The interval 1 to 35 (MATAPSYPAGLPGSPGPGSPPPPGGLELQSPPPLL) is disordered. Over residues 14–35 (SPGPGSPPPPGGLELQSPPPLL) the composition is skewed to pro residues. At Ser30 the chain carries Phosphoserine. At Tyr87 the chain carries Phosphotyrosine. The segment at 138-188 (PHALTVHSYRAPAFCDHCGEMLFGLVRQGLKCDGCGLNYHKRCAFSIPNNC) adopts a Phorbol-ester/DAG-type 1 zinc-finger fold. Phosphoserine occurs at positions 197, 198, 200, 203, 206, 212, and 214. The disordered stretch occupies residues 224–247 (RSTTELLPRRPPSSSSSSSASSYT). The segment covering 236 to 245 (SSSSSSSASS) has biased composition (low complexity). Phosphoserine; by CSNK1D and CSNK1E is present on Ser244. The Phorbol-ester/DAG-type 2 zinc-finger motif lies at 264–314 (PHTFLIHSYTRPTVCQACKKLLKGLFRQGLQCKDCKFNCHKRCATRVPNDC). The segment at 343–373 (ESEDSGVIPGSHSENALHASEEEEGEGGKAQ) is disordered. Residues 397–509 (TTLREGWVVH…WETAIRQALM (113 aa)) form the PH domain. Phosphotyrosine is present on Tyr407. Tyr438 is modified (phosphotyrosine; by ABL1). Residue Ser518 is modified to Phosphoserine. Residues 551-807 (IFPDEVLGSG…VDKSLSHPWL (257 aa)) enclose the Protein kinase domain. ATP contacts are provided by residues 557-565 (LGSGQFGVV) and Lys580. The active-site Proton acceptor is Asp674. At Ser706 the chain carries Phosphoserine; by PKC. Position 710 is a phosphoserine (Ser710). Phosphotyrosine; by ABL1 is present on Tyr717. The short motif at 724–726 (LNQ) is the Important for ABL1-mediated Tyr-717 phosphorylation element. The tract at residues 844–869 (HPLPGSGLPTDRDLGGACPPQDHDMQ) is disordered. At Ser876 the chain carries Phosphoserine; by autocatalysis.

This sequence belongs to the protein kinase superfamily. CAMK Ser/Thr protein kinase family. PKD subfamily. In terms of assembly, interacts (via C-terminus) with LCK. Interacts (via N-terminal AP-rich region) with CIB1 isoform 2. Interacts (via N-terminus and zing-finger domain 1 and 2) with PRKCD in response to oxidative stress; the interaction is independent of PRKD2 tyrosine phosphorylation. Mg(2+) serves as cofactor. Post-translationally, phosphorylation of Ser-876 correlates with the activation status of the kinase. Ser-706 or/and Ser-710 are probably phosphorylated by PKC. Phosphorylation at Ser-244 by CSNK1D and CSNK1E promotes nuclear localization and substrate targeting. Phosphorylation at Ser-244, Ser-706 and Ser-710 is required for nuclear localization. Phosphorylated at Tyr-438 by ABL1 in response to oxidative stress. Phosphorylated at Tyr-717 by ABL1 specifically in response to oxidative stress; requires prior phosphorylation at Ser-706 or/and Ser-710. As to expression, widely expressed.

The protein localises to the cytoplasm. It is found in the cell membrane. Its subcellular location is the nucleus. It localises to the golgi apparatus. The protein resides in the trans-Golgi network. The enzyme catalyses L-seryl-[protein] + ATP = O-phospho-L-seryl-[protein] + ADP + H(+). It catalyses the reaction L-threonyl-[protein] + ATP = O-phospho-L-threonyl-[protein] + ADP + H(+). Activated by DAG and phorbol esters. Phorbol-ester/DAG-type domains bind DAG, mediating translocation to membranes. Autophosphorylation of Ser-710 and phosphorylation of Ser-706 by PKC relieves auto-inhibition by the PH domain. Catalytic activity is further increased by phosphorylation at Tyr-717 in response to oxidative stress. In terms of biological role, serine/threonine-protein kinase that converts transient diacylglycerol (DAG) signals into prolonged physiological effects downstream of PKC, and is involved in the regulation of cell proliferation via MAPK1/3 (ERK1/2) signaling, oxidative stress-induced NF-kappa-B activation, inhibition of HDAC7 transcriptional repression, signaling downstream of T-cell antigen receptor (TCR) and cytokine production, and plays a role in Golgi membrane trafficking, angiogenesis, secretory granule release and cell adhesion. May potentiate mitogenesis induced by the neuropeptide bombesin by mediating an increase in the duration of MAPK1/3 (ERK1/2) signaling, which leads to accumulation of immediate-early gene products including FOS that stimulate cell cycle progression. In response to oxidative stress, is phosphorylated at Tyr-438 and Tyr-717 by ABL1, which leads to the activation of PRKD2 without increasing its catalytic activity, and mediates activation of NF-kappa-B. In response to the activation of the gastrin receptor CCKBR, is phosphorylated at Ser-244 by CSNK1D and CSNK1E, translocates to the nucleus, phosphorylates HDAC7, leading to nuclear export of HDAC7 and inhibition of HDAC7 transcriptional repression of NR4A1/NUR77. Upon TCR stimulation, is activated independently of ZAP70, translocates from the cytoplasm to the nucleus and is required for interleukin-2 (IL2) promoter up-regulation. During adaptive immune responses, is required in peripheral T-lymphocytes for the production of the effector cytokines IL2 and IFNG after TCR engagement and for optimal induction of antibody responses to antigens. In epithelial cells stimulated with lysophosphatidic acid (LPA), is activated through a PKC-dependent pathway and mediates LPA-stimulated interleukin-8 (IL8) secretion via a NF-kappa-B-dependent pathway. During TCR-induced T-cell activation, interacts with and is activated by the tyrosine kinase LCK, which results in the activation of the NFAT transcription factors. In the trans-Golgi network (TGN), regulates the fission of transport vesicles that are on their way to the plasma membrane and in polarized cells is involved in the transport of proteins from the TGN to the basolateral membrane. Plays an important role in endothelial cell proliferation and migration prior to angiogenesis, partly through modulation of the expression of KDR/VEGFR2 and FGFR1, two key growth factor receptors involved in angiogenesis. In secretory pathway, is required for the release of chromogranin-A (CHGA)-containing secretory granules from the TGN. Downstream of PRKCA, plays important roles in angiotensin-2-induced monocyte adhesion to endothelial cells. Plays a regulatory role in angiogenesis and tumor growth by phosphorylating a downstream mediator CIB1 isoform 2, resulting in vascular endothelial growth factor A (VEGFA) secretion. The polypeptide is Serine/threonine-protein kinase D2 (PRKD2) (Homo sapiens (Human)).